The primary structure comprises 345 residues: Protein RecA (345 aa).

65-72 contacts ATP; the sequence is GPESSGKT.

The protein belongs to the RecA family.

The protein resides in the cytoplasm. In terms of biological role, can catalyze the hydrolysis of ATP in the presence of single-stranded DNA, the ATP-dependent uptake of single-stranded DNA by duplex DNA, and the ATP-dependent hybridization of homologous single-stranded DNAs. It interacts with LexA causing its activation and leading to its autocatalytic cleavage. The chain is Protein RecA from Hahella chejuensis (strain KCTC 2396).